Consider the following 405-residue polypeptide: Angiopoietin-related protein 4 (405 aa).

The first 23 residues, 1–23 (MRCAPTAGAALVLCAATAGLLSA), serve as a signal peptide directing secretion. A coiled-coil region spans residues 54–146 (GLREHVERTR…QNLQSQIDLL (93 aa)). Asn176 is a glycosylation site (N-linked (GlcNAc...) asparagine). Residues 178–400 (TRLHRPPRDC…ATTLLIQPME (223 aa)) form the Fibrinogen C-terminal domain. A disulfide bridge connects residues Cys187 and Cys215. N-linked (GlcNAc...) asparagine glycosylation is found at Asn231 and Asn237. Cys340 and Cys353 are oxidised to a cystine.

As to quaternary structure, homooligomer; disulfide-linked via Cys residues in the N-terminal part of the protein. The homooligomer undergoes proteolytic processing to release its carboxyl fibrinogen-like domain, which circulates as a monomer. The homooligomer unprocessed form is able to interact with the extracellular matrix. Post-translationally, N-glycosylated. In terms of processing, forms disulfide-linked dimers and tetramers. Cleaved into a smaller N-terminal chain and a larger chain that contains the fibrinogen C-terminal domain; both cleaved and uncleaved forms are detected in the extracellular space. The cleaved form is not present within the cell.

It is found in the secreted. The protein localises to the extracellular space. Its subcellular location is the extracellular matrix. Its function is as follows. Mediates inactivation of the lipoprotein lipase LPL, and thereby plays a role in the regulation of triglyceride clearance from the blood serum and in lipid metabolism. May also play a role in regulating glucose homeostasis and insulin sensitivity. Inhibits proliferation, migration, and tubule formation of endothelial cells and reduces vascular leakage. Upon heterologous expression, inhibits the adhesion of endothelial cell to the extracellular matrix (ECM), and inhibits the reorganization of the actin cytoskeleton, formation of actin stress fibers and focal adhesions in endothelial cells that have adhered to ANGPTL4-containing ECM (in vitro). Depending on context, may modulate tumor-related angiogenesis. Functionally, mediates inactivation of the lipoprotein lipase LPL, and thereby plays an important role in the regulation of triglyceride clearance from the blood serum and in lipid metabolism. Has higher activity in LPL inactivation than the uncleaved protein. This Rattus norvegicus (Rat) protein is Angiopoietin-related protein 4 (Angptl4).